Consider the following 262-residue polypeptide: Adenosylcobinamide-GDP ribazoletransferase (262 aa).

The next 6 helical transmembrane spans lie at 43 to 63 (YFGL…WLTQ), 66 to 86 (LPAG…TGGF), 120 to 140 (GALA…ELAL), 146 to 166 (AGSA…SLIF), 191 to 211 (LFIL…IAAL), and 242 to 262 (AAQQ…GGIL).

It belongs to the CobS family. The cofactor is Mg(2+).

The protein localises to the cell inner membrane. It catalyses the reaction alpha-ribazole + adenosylcob(III)inamide-GDP = adenosylcob(III)alamin + GMP + H(+). The catalysed reaction is alpha-ribazole 5'-phosphate + adenosylcob(III)inamide-GDP = adenosylcob(III)alamin 5'-phosphate + GMP + H(+). It functions in the pathway cofactor biosynthesis; adenosylcobalamin biosynthesis; adenosylcobalamin from cob(II)yrinate a,c-diamide: step 7/7. Joins adenosylcobinamide-GDP and alpha-ribazole to generate adenosylcobalamin (Ado-cobalamin). Also synthesizes adenosylcobalamin 5'-phosphate from adenosylcobinamide-GDP and alpha-ribazole 5'-phosphate. In Shewanella oneidensis (strain ATCC 700550 / JCM 31522 / CIP 106686 / LMG 19005 / NCIMB 14063 / MR-1), this protein is Adenosylcobinamide-GDP ribazoletransferase.